The chain runs to 323 residues: Sphingolipid delta(4)-desaturase DES1 (323 aa).

G2 carries the N-myristoyl glycine lipid modification. Transmembrane regions (helical) follow at residues 41–61 (PNLIWIIIMMVLTQLGAFYIV) and 68–88 (WVIFGAYAFGSCINHSMTLAI). Residues 89–93 (HEIAH) carry the Histidine box-1 motif. The helical transmembrane segment at 102-122 (AMWNRWFGMFANLPIGIPYSI) threads the bilayer. Positions 128–132 (HMDHH) match the Histidine box-2 motif. The next 3 membrane-spanning stretches (helical) occupy residues 152-172 (FFCTAFRKFIWVILQPLFYAF), 184-204 (YLEVINTVAQVTFDILIYYFL), and 209-229 (LVYMLAASLLGLGLHPISGHF). Residues 259-263 (HNEHH) carry the Histidine box-3 motif. S307 carries the phosphoserine modification.

It belongs to the fatty acid desaturase type 1 family. DEGS subfamily. In terms of assembly, interacts with RLBP1; the interaction increases synthesis of chromophore-precursors by DEGS1. Post-translationally, myristoylation can target the enzyme to the mitochondria leading to an increase in ceramide levels. As to expression, ubiquitous.

The protein localises to the mitochondrion membrane. Its subcellular location is the endoplasmic reticulum membrane. The enzyme catalyses an N-acylsphinganine + 2 Fe(II)-[cytochrome b5] + O2 + 2 H(+) = an N-acylsphing-4-enine + 2 Fe(III)-[cytochrome b5] + 2 H2O. It catalyses the reaction all-trans-retinol = 11-cis-retinol. It carries out the reaction all-trans-retinol = 9-cis-retinol. The catalysed reaction is all-trans-retinol = 13-cis-retinol. The enzyme catalyses 11-cis-retinol = 13-cis-retinol. It catalyses the reaction 11-cis-retinol = 9-cis-retinol. Its function is as follows. Has sphingolipid-delta-4-desaturase activity. Converts D-erythro-sphinganine to D-erythro-sphingosine (E-sphing-4-enine). Catalyzes the equilibrium isomerization of retinols. The protein is Sphingolipid delta(4)-desaturase DES1 of Homo sapiens (Human).